We begin with the raw amino-acid sequence, 59 residues long: Small, acid-soluble spore protein H (59 aa).

This sequence belongs to the SspH family.

The protein localises to the spore core. The polypeptide is Small, acid-soluble spore protein H (Bacillus cereus (strain ZK / E33L)).